Here is a 164-residue protein sequence, read N- to C-terminus: Low molecular weight phosphotyrosine protein phosphatase 2 (164 aa).

The Nucleophile role is filled by Cys-14. Residue Arg-20 is part of the active site. Asp-130 serves as the catalytic Proton donor.

It belongs to the low molecular weight phosphotyrosine protein phosphatase family. As to expression, cone cells and primary pigment cells in developing pupal retina.

It is found in the cytoplasm. It carries out the reaction O-phospho-L-tyrosyl-[protein] + H2O = L-tyrosyl-[protein] + phosphate. It catalyses the reaction a phosphate monoester + H2O = an alcohol + phosphate. Its function is as follows. Catalyzes the dephosphorylation of tyrosine phosphorylated proteins and low-MW aryl phosphates. Can contribute to the regulation of a variety of developmental processes. The sequence is that of Low molecular weight phosphotyrosine protein phosphatase 2 (primo-2) from Drosophila melanogaster (Fruit fly).